Reading from the N-terminus, the 147-residue chain is Cyanate hydratase (147 aa).

Catalysis depends on residues R88, E91, and S114.

This sequence belongs to the cyanase family.

It catalyses the reaction cyanate + hydrogencarbonate + 3 H(+) = NH4(+) + 2 CO2. In terms of biological role, catalyzes the reaction of cyanate with bicarbonate to produce ammonia and carbon dioxide. This chain is Cyanate hydratase, found in Polaromonas sp. (strain JS666 / ATCC BAA-500).